The following is a 378-amino-acid chain: MAKRDFYEVLGLSKTADEKEIKRAYKRLAMKYHPDRNQGDKDSESKFKEIKEAYEVLSDPQKRAAYDQYGHAAFEQGGFGGQGGGGFGGADFSDIFGDVFGDIFGGGRRQQRAARGSDLQYNMDLTLEEAVRGITKEIRIPTLETCDKCHGSGAKEGTSAETCSTCHGAGQVHLRQGFFTVQQPCPTCHGRGKVIKEPCSKCHGDGRVERYKTLSVKIPAGVDTGDRIRLSGEGEAGEQGAPAGDLYVQVHVRQHHIFERDGNNLYCEVPINFAVAALGGEIEVPTLDGRVKLKIPAETQTGKMFRMKGKGVKSVRSHGVGDLMCRVVVETPVKLNEKQKQLMEQLGESFGGKGGEKNTPRSKSFLDGVKKFFDDLTK.

One can recognise a J domain in the interval 5–70 (DFYEVLGLSK…QKRAAYDQYG (66 aa)). A CR-type zinc finger spans residues 133–211 (GITKEIRIPT…CHGDGRVERY (79 aa)). Zn(2+)-binding residues include C146, C149, C163, C166, C185, C188, C199, and C202. 4 CXXCXGXG motif repeats span residues 146 to 153 (CDKCHGSG), 163 to 170 (CSTCHGAG), 185 to 192 (CPTCHGRG), and 199 to 206 (CSKCHGDG).

It belongs to the DnaJ family. In terms of assembly, homodimer. The cofactor is Zn(2+).

Its subcellular location is the cytoplasm. Its function is as follows. Participates actively in the response to hyperosmotic and heat shock by preventing the aggregation of stress-denatured proteins and by disaggregating proteins, also in an autonomous, DnaK-independent fashion. Unfolded proteins bind initially to DnaJ; upon interaction with the DnaJ-bound protein, DnaK hydrolyzes its bound ATP, resulting in the formation of a stable complex. GrpE releases ADP from DnaK; ATP binding to DnaK triggers the release of the substrate protein, thus completing the reaction cycle. Several rounds of ATP-dependent interactions between DnaJ, DnaK and GrpE are required for fully efficient folding. Also involved, together with DnaK and GrpE, in the DNA replication of plasmids through activation of initiation proteins. The chain is Chaperone protein DnaJ from Proteus mirabilis (strain HI4320).